Reading from the N-terminus, the 174-residue chain is Peptide methionine sulfoxide reductase MsrA (174 aa).

Residue Cys10 is part of the active site.

It belongs to the MsrA Met sulfoxide reductase family.

The catalysed reaction is L-methionyl-[protein] + [thioredoxin]-disulfide + H2O = L-methionyl-(S)-S-oxide-[protein] + [thioredoxin]-dithiol. The enzyme catalyses [thioredoxin]-disulfide + L-methionine + H2O = L-methionine (S)-S-oxide + [thioredoxin]-dithiol. Has an important function as a repair enzyme for proteins that have been inactivated by oxidation. Catalyzes the reversible oxidation-reduction of methionine sulfoxide in proteins to methionine. This is Peptide methionine sulfoxide reductase MsrA from Paenarthrobacter aurescens (strain TC1).